A 348-amino-acid polypeptide reads, in one-letter code: Cylicin-2 (348 aa).

The 31 X 3 AA repeats of K-K-X stretch occupies residues 25–347 (KKSWNQQHFA…DEKKDAKKKG (323 aa)). Disordered stretches follow at residues 35–59 (LLFP…DNTV) and 101–348 (PTRT…KKGK). 4 stretches are compositionally biased toward basic and acidic residues: residues 103–159 (RTVE…DAKK), 166–217 (KDAE…EKDS), 238–267 (KADE…AKEI), and 276–342 (KPSS…EKKD). 3 consecutive repeat copies span residues 157–184 (AKKD…EKGG), 185–212 (AKKD…EKGG), and 213–240 (TEKD…VKAD). A 3 X approximate tandem repeats region spans residues 157–240 (AKKDSKKGKK…AIELQAVKAD (84 aa)).

As to expression, testis.

The protein localises to the cytoplasm. It is found in the cytoskeleton. The protein resides in the perinuclear theca. It localises to the calyx. Plays a role in the establishment of normal sperm morphology during spermatogenesis. It is required for acrosome attachment to the nuclear envelope, and proper manchette elongation and disassembly. The chain is Cylicin-2 (CYLC2) from Homo sapiens (Human).